Reading from the N-terminus, the 300-residue chain is Acetaldehyde dehydrogenase 3 (300 aa).

Residue 11-14 (SGNI) participates in NAD(+) binding. Residue Cys126 is the Acyl-thioester intermediate of the active site. NAD(+) contacts are provided by residues 157 to 165 (SAGPGTRAN) and Asn276.

This sequence belongs to the acetaldehyde dehydrogenase family.

The enzyme catalyses acetaldehyde + NAD(+) + CoA = acetyl-CoA + NADH + H(+). This Rhodococcus jostii (strain RHA1) protein is Acetaldehyde dehydrogenase 3 (hsaG).